Reading from the N-terminus, the 262-residue chain is Acyl-[acyl-carrier-protein]--UDP-N-acetylglucosamine O-acyltransferase (262 aa).

The protein belongs to the transferase hexapeptide repeat family. LpxA subfamily. In terms of assembly, homotrimer.

It localises to the cytoplasm. The enzyme catalyses a (3R)-hydroxyacyl-[ACP] + UDP-N-acetyl-alpha-D-glucosamine = a UDP-3-O-[(3R)-3-hydroxyacyl]-N-acetyl-alpha-D-glucosamine + holo-[ACP]. The protein operates within glycolipid biosynthesis; lipid IV(A) biosynthesis; lipid IV(A) from (3R)-3-hydroxytetradecanoyl-[acyl-carrier-protein] and UDP-N-acetyl-alpha-D-glucosamine: step 1/6. Functionally, involved in the biosynthesis of lipid A, a phosphorylated glycolipid that anchors the lipopolysaccharide to the outer membrane of the cell. The polypeptide is Acyl-[acyl-carrier-protein]--UDP-N-acetylglucosamine O-acyltransferase (Aliivibrio salmonicida (strain LFI1238) (Vibrio salmonicida (strain LFI1238))).